A 349-amino-acid chain; its full sequence is Glycosyltransferase 8 domain-containing protein 2 (349 aa).

The Cytoplasmic portion of the chain corresponds to 1–6 (MALLRK). A helical; Signal-anchor for type II membrane protein transmembrane segment spans residues 7–24 (INQVLLFLLIVTLCVILY). Topologically, residues 25 to 349 (KKVHKGTVPK…AGIFKLNHHS (325 aa)) are lumenal. N-linked (GlcNAc...) asparagine glycosylation is present at asparagine 234.

This sequence belongs to the glycosyltransferase 8 family.

The protein resides in the membrane. This chain is Glycosyltransferase 8 domain-containing protein 2 (GLT8D2), found in Homo sapiens (Human).